Consider the following 84-residue polypeptide: Gas vesicle protein M1 (84 aa).

The segment at 1-25 is interacts with GvpL1; the sequence is MEPTKDETHAIVEFVDVLLRDGAVI. The tract at residues 5–21 is alpha helix 1; the sequence is KDETHAIVEFVDVLLRD. 2 beta-strand regions span residues 27–29 and 41–43; these read ADV and ISL. A Conserved in GvpJ1/2 but not GvpA motif is present at residues 44–48; that stretch reads RAAIA. Alpha helix regions lie at residues 46–56 and 62–84; these read AIAGMTTMTEY and WDAAHRQQSEAFTTSPTADRRED.

It belongs to the gas vesicle GvpA family. As to quaternary structure, gvpF to GvpM interact with each other in vitro, and may form multi-subunit complex(es). Might interact with GvpA1.

Its subcellular location is the gas vesicle. Functionally, proteins GvpF to GvpM might be involved in nucleating gas vesicle formation. A minor component of the gas vesicle. Gas vesicles are hollow, gas filled proteinaceous nanostructures found in several microbial planktonic microorganisms. They allow positioning of halobacteria at the optimal depth for growth in the poorly aerated, shallow brine pools of their habitat. Its function is as follows. Expression of a 9.5 kb p-vac DNA fragment containing 2 divergently transcribed regions (gvpD-gvpE-gvpF-gvpG-gvpH-gvpI-gvpJ-gvpK-gvpL-gvpM and gvpA-gvpC-gvpN-gvpO) allows H.volcanii to produce gas vesicles. All site-directed mutagenesis is tested in H.volcanii. A minimal gas vesicle can be made in H.volcanii by gvpA1-gvpO1 plus gvpF1-gvpG1-gvpJ1-gvpK1-gvpL1-gvpM1; lack of enough GvpJ1 prevents formation. A similar region restores gas vesicle production in H.halobium without the p-vac locus, but it still has the c-vac locus. This Halobacterium salinarum (strain ATCC 700922 / JCM 11081 / NRC-1) (Halobacterium halobium) protein is Gas vesicle protein M1 (gvpM11).